Here is a 210-residue protein sequence, read N- to C-terminus: Hydrogenase expression/formation protein HupD (210 aa).

Glu-22, Asp-68, and His-99 together coordinate Ni(2+).

Belongs to the peptidase A31 family.

Not known. Could be involved in the processing of hydrogenase. This Rhodobacter capsulatus (Rhodopseudomonas capsulata) protein is Hydrogenase expression/formation protein HupD (hupD).